The following is a 340-amino-acid chain: L-threonine 3-dehydrogenase (340 aa).

C38 is a binding site for Zn(2+). Catalysis depends on charge relay system residues T40 and H43. 6 residues coordinate Zn(2+): H63, E64, C93, C96, C99, and C107. NAD(+) contacts are provided by residues I175, D195, R200, 261 to 263 (LGI), and 285 to 286 (IY).

Belongs to the zinc-containing alcohol dehydrogenase family. As to quaternary structure, homotetramer. Zn(2+) serves as cofactor.

Its subcellular location is the cytoplasm. It carries out the reaction L-threonine + NAD(+) = (2S)-2-amino-3-oxobutanoate + NADH + H(+). Its pathway is amino-acid degradation; L-threonine degradation via oxydo-reductase pathway; glycine from L-threonine: step 1/2. In terms of biological role, catalyzes the NAD(+)-dependent oxidation of L-threonine to 2-amino-3-ketobutyrate. This Stenotrophomonas maltophilia (strain K279a) protein is L-threonine 3-dehydrogenase.